We begin with the raw amino-acid sequence, 749 residues long: MTARPAVRQPAGLPCPQPCNRYGYPMTNALLAEIDALVAGTHHNPHALLGAHPGPEGVWVRALRPLARSVHVLLANGSRVELPHLHKGVFAGVVPGAEVPDYRLVVRYDDGTELTVDDPYRHLPTLGELDIHLIQEGRHEELWRVLGAHTKRFPSVLGDTEGTAFTVWAPNARGVRVIGDFNHWDGTGHPMRSLGSCGVWELFIPGVGDGTRYKYQVLGADGVWREKADPVAFATQAPPETASVVFTSRYTWQDDEWLTQRAAADLHRKPMSIYEVHLGSWRPGLSYRELADQLVDYVRELGFTHVEFLPVAEHPFGGSWGYQVTSYYAPTARFGSPDDFRYLVDRLHQAGIGVFLDWVPAHFPKDDWALSRFDGTALYEHPDPRRGIHPDWDTLIFNYGRTEVRNFLVANALFWLEEFHIDGLRVDAVASMLYLDYSRESGQWEPNAYGGRENLDAIDFLRELNATAYRRNPGIAMIAEESTAWPGVTRSTDTGGLGFGFKWNMGWMHDTLSYLQHDPVHRQYHHNEVTFSMVYAYSENYVLPLSHDEVVHGKRSLLYKMPGNEWQRCANLRALLAYMWAHPGKQLLFMGNEIAQGDEWSHDAGVQWWLLRYPHHAGMRRLVADLNRLYRNTRALWSQDTVPEGFTWLDGGDASGNTLSFLRWGDDGSVLACLVNFSGRPHPERRVGLPYAGRWREILNTDAVLYGGSGVSQPGIIEASEETPWQGQPASALVTYPPLGVSWLVFDGT.

The Nucleophile role is filled by Asp427. Catalysis depends on Glu480, which acts as the Proton donor.

The protein belongs to the glycosyl hydrolase 13 family. GlgB subfamily. In terms of assembly, monomer.

It carries out the reaction Transfers a segment of a (1-&gt;4)-alpha-D-glucan chain to a primary hydroxy group in a similar glucan chain.. It participates in glycan biosynthesis; glycogen biosynthesis. In terms of biological role, catalyzes the formation of the alpha-1,6-glucosidic linkages in glycogen by scission of a 1,4-alpha-linked oligosaccharide from growing alpha-1,4-glucan chains and the subsequent attachment of the oligosaccharide to the alpha-1,6 position. This chain is 1,4-alpha-glucan branching enzyme GlgB, found in Thermobifida fusca (strain YX).